Consider the following 493-residue polypeptide: Tripartite motif-containing protein 5 (493 aa).

N-acetylalanine is present on Ala-2. The segment at 15–59 (CPICLELLTQPLSLDCGHSFCQACLTANHKKSTLDKGERSCPVCR) adopts an RING-type zinc-finger fold. Residue Ser-86 is modified to Phosphoserine. Residues 90–132 (QKVDHCARHGEKLLLFCKEDGKVICWLCERSQEHRGHHTFLTE) form a B box-type zinc finger. The Zn(2+) site is built by Cys-95, His-98, Cys-117, and His-123. Positions 131–223 (TEEVAQKYQV…LTKSETEMVQ (93 aa)) form a coiled coil. Residues 185 to 198 (FEQLRDILDWEESN) are required for interaction with GABARAP and for autophagy. One can recognise a B30.2/SPRY domain in the interval 281–493 (LKGMLEVFRE…VPMTLCSPSS (213 aa)).

Belongs to the TRIM/RBCC family. Can form homodimers and homotrimers. In addition to lower-order dimerization, also exhibits a higher-order multimerization and both low- and high-order multimerizations are essential for its restriction activity. Interacts with BTBD1 and BTBD2. Interacts with PSMC4, PSMC5, PSMD7 and HSPA8/HSC70. Interacts (via B30.2/SPRY domain) with HSPA1A/B. Interacts with PSMC2, MAP3K7/TAK1, TAB2 and TAB3. Interacts with SQSTM1. Interacts with TRIM6 and TRIM34. Interacts with ULK1 (phosphorylated form), GABARAP, GABARAPL1, GABARAPL2, MAP1LC3A, MAP1LC3C and BECN1. Post-translationally, degraded in a proteasome-independent fashion in the absence of viral infection but in a proteasome-dependent fashion following exposure to restriction sensitive virus. Autoubiquitinated in a RING finger- and UBE2D2-dependent manner. Monoubiquitinated by TRIM21. Deubiquitinated by Yersinia YopJ. Ubiquitination may not lead to proteasomal degradation.

The protein resides in the cytoplasm. The protein localises to the nucleus. The enzyme catalyses S-ubiquitinyl-[E2 ubiquitin-conjugating enzyme]-L-cysteine + [acceptor protein]-L-lysine = [E2 ubiquitin-conjugating enzyme]-L-cysteine + N(6)-ubiquitinyl-[acceptor protein]-L-lysine.. It functions in the pathway protein modification; protein ubiquitination. In terms of biological role, capsid-specific restriction factor that prevents infection from non-host-adapted retroviruses. Blocks viral replication early in the life cycle, after viral entry but before reverse transcription. In addition to acting as a capsid-specific restriction factor, also acts as a pattern recognition receptor that activates innate immune signaling in response to the retroviral capsid lattice. Binding to the viral capsid triggers its E3 ubiquitin ligase activity, and in concert with the heterodimeric ubiquitin conjugating enzyme complex UBE2V1-UBE2N (also known as UBC13-UEV1A complex) generates 'Lys-63'-linked polyubiquitin chains, which in turn are catalysts in the autophosphorylation of the MAP3K7/TAK1 complex (includes TAK1, TAB2, and TAB3). Activation of the MAP3K7/TAK1 complex by autophosphorylation results in the induction and expression of NF-kappa-B and MAPK-responsive inflammatory genes, thereby leading to an innate immune response in the infected cell. Plays a role in regulating autophagy through activation of autophagy regulator BECN1 by causing its dissociation from its inhibitors BCL2 and TAB2. This Pongo pygmaeus (Bornean orangutan) protein is Tripartite motif-containing protein 5 (TRIM5).